Reading from the N-terminus, the 177-residue chain is MFKELYRDSIVKSLKDKFNYGNIMQVPKLVKVCINMGVGGAATDNKAINEPFDDLYLIAGQKPVSTFAKKSISGFKIRKGATVGCKVTLRRDKMYEFLERLIYVALPREKDFRGFSVKQFDGNGNFSFGIKEHISFLEIDYDKISKIRGMDINIVTSAASDKEAKELLLAFKFPFFD.

It belongs to the universal ribosomal protein uL5 family. In terms of assembly, part of the 50S ribosomal subunit; part of the 5S rRNA/L5/L18/L25 subcomplex. Contacts the 5S rRNA and the P site tRNA. Forms a bridge to the 30S subunit in the 70S ribosome.

Its function is as follows. This is one of the proteins that bind and probably mediate the attachment of the 5S RNA into the large ribosomal subunit, where it forms part of the central protuberance. In the 70S ribosome it contacts protein S13 of the 30S subunit (bridge B1b), connecting the 2 subunits; this bridge is implicated in subunit movement. Contacts the P site tRNA; the 5S rRNA and some of its associated proteins might help stabilize positioning of ribosome-bound tRNAs. In Wolbachia sp. subsp. Brugia malayi (strain TRS), this protein is Large ribosomal subunit protein uL5.